The following is a 401-amino-acid chain: tRNA(Met) cytidine acetate ligase (401 aa).

ATP contacts are provided by residues 7–20, Gly102, Asn164, and Arg189; that span reads IVEY…HLYH.

The protein belongs to the TmcAL family.

Its subcellular location is the cytoplasm. It catalyses the reaction cytidine(34) in elongator tRNA(Met) + acetate + ATP = N(4)-acetylcytidine(34) in elongator tRNA(Met) + AMP + diphosphate. In terms of biological role, catalyzes the formation of N(4)-acetylcytidine (ac(4)C) at the wobble position of elongator tRNA(Met), using acetate and ATP as substrates. First activates an acetate ion to form acetyladenylate (Ac-AMP) and then transfers the acetyl group to tRNA to form ac(4)C34. The protein is tRNA(Met) cytidine acetate ligase of Caldanaerobacter subterraneus subsp. tengcongensis (strain DSM 15242 / JCM 11007 / NBRC 100824 / MB4) (Thermoanaerobacter tengcongensis).